A 949-amino-acid chain; its full sequence is MAM domain-containing glycosylphosphatidylinositol anchor protein 2 (949 aa).

The first 25 residues, 1-25 (MDLVYGLVWLLTVLLEGISGQGVYA), serve as a signal peptide directing secretion. Ig-like domains are found at residues 27 to 127 (PTVR…IRVD) and 134 to 232 (PVVT…KMVS). Disulfide bonds link cysteine 62-cysteine 110 and cysteine 159-cysteine 216. N-linked (GlcNAc...) asparagine glycosylation is found at asparagine 92, asparagine 213, and asparagine 237. Ig-like domains follow at residues 242-328 (PSIK…NIIV), 340-436 (PDPY…VNIS), 442-533 (PNLT…ALVQ), and 540-627 (PAVE…FLVT). 2 cysteine pairs are disulfide-bonded: cysteine 264-cysteine 310 and cysteine 359-cysteine 417. N-linked (GlcNAc...) asparagine glycosylation is found at asparagine 434, asparagine 443, asparagine 504, asparagine 610, and asparagine 703. Disulfide bonds link cysteine 465–cysteine 515 and cysteine 561–cysteine 611. The region spanning 638-738 (DTYNPVWQNR…TIRVIKYTGE (101 aa)) is the Fibronectin type-III domain. The MAM domain maps to 739 to 914 (FHCGFEDGNI…VSIAEGECAK (176 aa)). Residue aspartate 924 is the site of GPI-anchor amidated aspartate attachment. The propeptide at 925–949 (GAVGILVHIWLFPVIILISILSPRR) is removed in mature form.

As to quaternary structure, interacts (through the Ig-like domains) with NLGN2. In terms of tissue distribution, expressed predominantly in neuronal tissue. Expressed in brain.

The protein localises to the cell membrane. May be involved in cell-cell interactions. The polypeptide is MAM domain-containing glycosylphosphatidylinositol anchor protein 2 (Mdga2) (Rattus norvegicus (Rat)).